Reading from the N-terminus, the 450-residue chain is TNF receptor-associated factor family protein DDB_G0273433/DDB_G0273509 (450 aa).

The RING-type; degenerate zinc-finger motif lies at 26-73 (CQICFNSVIDFKKETLSFDVLQCRNGHISCHECWNRQLSIKQECPSCK). 2 consecutive TRAF-type zinc fingers follow at residues 129–185 (HHLK…KKLN) and 186–243 (KHIE…SQLS). The stretch at 257–297 (QNVMDLHKLQLDECNQDYRKLEKQNRDLEKRLFYLESTVNS) forms a coiled coil. Residues 319–439 (VYKGKWVINN…NNSLTISISI (121 aa)) enclose the MATH domain.

It belongs to the TNF receptor-associated factor family. A subfamily.

It is found in the cytoplasm. Functionally, probable adapter protein and signal transducer that links members of the tumor necrosis factor receptor family to different signaling pathways by association with the receptor cytoplasmic domain and kinases. This is TNF receptor-associated factor family protein DDB_G0273433/DDB_G0273509 from Dictyostelium discoideum (Social amoeba).